Reading from the N-terminus, the 256-residue chain is tRNA-cytidine(32) 2-sulfurtransferase 1 (256 aa).

Residues 38–43 carry the PP-loop motif motif; that stretch reads SGGKDS. [4Fe-4S] cluster-binding residues include Cys-113, Cys-116, and Cys-204.

Belongs to the TtcA family. As to quaternary structure, homodimer. Mg(2+) serves as cofactor. It depends on [4Fe-4S] cluster as a cofactor.

Its subcellular location is the cytoplasm. It catalyses the reaction cytidine(32) in tRNA + S-sulfanyl-L-cysteinyl-[cysteine desulfurase] + AH2 + ATP = 2-thiocytidine(32) in tRNA + L-cysteinyl-[cysteine desulfurase] + A + AMP + diphosphate + H(+). It participates in tRNA modification. Catalyzes the ATP-dependent 2-thiolation of cytidine in position 32 of tRNA, to form 2-thiocytidine (s(2)C32). The sulfur atoms are provided by the cysteine/cysteine desulfurase (IscS) system. This Francisella philomiragia subsp. philomiragia (strain ATCC 25017 / CCUG 19701 / FSC 153 / O#319-036) protein is tRNA-cytidine(32) 2-sulfurtransferase 1.